The chain runs to 243 residues: Adenosine 5'-phosphosulfate reductase (243 aa).

Positions 126, 127, 209, and 212 each coordinate [4Fe-4S] cluster. C235 acts as the Nucleophile; cysteine thiosulfonate intermediate in catalysis.

This sequence belongs to the PAPS reductase family. CysH subfamily. [4Fe-4S] cluster is required as a cofactor.

It is found in the cytoplasm. It catalyses the reaction [thioredoxin]-disulfide + sulfite + AMP + 2 H(+) = adenosine 5'-phosphosulfate + [thioredoxin]-dithiol. It functions in the pathway sulfur metabolism; hydrogen sulfide biosynthesis; sulfite from sulfate. Catalyzes the formation of sulfite from adenosine 5'-phosphosulfate (APS) using thioredoxin as an electron donor. This chain is Adenosine 5'-phosphosulfate reductase, found in Staphylococcus epidermidis (strain ATCC 12228 / FDA PCI 1200).